Here is a 308-residue protein sequence, read N- to C-terminus: Glycine--tRNA ligase alpha subunit (308 aa).

The protein belongs to the class-II aminoacyl-tRNA synthetase family. In terms of assembly, tetramer of two alpha and two beta subunits.

Its subcellular location is the cytoplasm. It catalyses the reaction tRNA(Gly) + glycine + ATP = glycyl-tRNA(Gly) + AMP + diphosphate. The protein is Glycine--tRNA ligase alpha subunit of Brucella canis (strain ATCC 23365 / NCTC 10854 / RM-666).